Here is a 130-residue protein sequence, read N- to C-terminus: Methylglyoxal synthase (130 aa).

Residues 1–130 (MSKPRIALIA…DLARNMQDVC (130 aa)) enclose the MGS-like domain. Residues histidine 11, lysine 15, 37-40 (TGTT), and 57-58 (SG) each bind substrate. Aspartate 63 (proton donor/acceptor) is an active-site residue. Position 90 (histidine 90) interacts with substrate.

It belongs to the methylglyoxal synthase family.

The enzyme catalyses dihydroxyacetone phosphate = methylglyoxal + phosphate. Catalyzes the formation of methylglyoxal from dihydroxyacetone phosphate. The chain is Methylglyoxal synthase from Burkholderia cenocepacia (strain HI2424).